The following is a 988-amino-acid chain: Vacuolar sorting protein 18 (988 aa).

Residues 589-749 form a CHCR repeat; that stretch reads NKNLNPRRLI…VVKQEKGAKR (161 aa). Residues 785 to 819 are a coiled coil; it reads KEAICSSLEDYNKQIEQLKEEMNDATRGADNIRND. The RING-type; degenerate zinc finger occupies 836–886; sequence CGVCKRKILMMSGDFRMAQGYSSAGPLAPFYVFPCGHSFHAQCLITHVTSC.

It belongs to the VPS18 family. In terms of assembly, core component of at least two putative endosomal tethering complexes, the homotypic fusion and vacuole protein sorting (HOPS) complex and the class C core vacuole/endosome tethering (CORVET) complex. Their common core is composed of the class C Vps proteins VPS11, VCL1, VPS18 and VPS33, which in HOPS further associates with VPS39 and VPS41 and in CORVET with VPS3.

Its subcellular location is the endosome membrane. The protein localises to the vacuole membrane. It is found in the cytoplasm. Its function is as follows. Essential protein required during embryogenesis. Believed to act as a core component of the putative HOPS endosomal tethering complex and of the class C core vacuole/endosome tethering (CORVET) complex. CORVET is required for vacuolar transport of SYP22. HOPS is required for the central vacuole formation. Involved in root development. Plays a role in vesicle-mediated protein trafficking to lysosomal compartments including the endocytic membrane transport pathways. The sequence is that of Vacuolar sorting protein 18 from Arabidopsis thaliana (Mouse-ear cress).